Consider the following 206-residue polypeptide: MLSMFMCNNIVDYVDDIDNGIVQDIEDEASNNVDHDYVYPLPENMVYRFDKSTNILDYLSTERDHVMMAVRYYMSKQRLDDLYRQLPTKTRSYIDIINIYCDKVSNDYNRDMNIMYDMASTKSFTVYDINNEVNTILMDNKGLGVRLATISFITELGRRCMNPVKTIKMFTLLSHTICDDCFVDYITDISPPDNTIPNTSTREYLK.

Belongs to the orthopoxvirus OPG045 family. In terms of assembly, homodimer. Interacts with host pro-apoptotic protein BCL2L11 (via BH3 domain). Interacts with host NLRP1. Interacts with host BAK.

It is found in the host mitochondrion outer membrane. Its subcellular location is the host cytoplasm. In terms of biological role, plays a role in evading host innate immune response by inhibiting host inflammasome activation. Interacts with and inhibits NLR-mediated interleukin-1 beta/IL1B production in infected cells. At the host mitochondria outer membrane, interacts with the BH3 domain of host BAK and prevents BAK from binding active BAX. In turn, host apoptosis is inhibited. This is Apoptosis regulator OPG045 (OPG045) from Vaccinia virus (strain L-IVP) (VACV).